A 240-amino-acid polypeptide reads, in one-letter code: 4-hydroxy-tetrahydrodipicolinate reductase (240 aa).

Residues 8 to 13 (GSTGKM), 78 to 80 (GTT), and 102 to 105 (SANM) each bind NAD(+). Histidine 134 functions as the Proton donor/acceptor in the catalytic mechanism. Histidine 135 provides a ligand contact to (S)-2,3,4,5-tetrahydrodipicolinate. Residue lysine 138 is the Proton donor of the active site. 144 to 145 (GT) provides a ligand contact to (S)-2,3,4,5-tetrahydrodipicolinate.

It belongs to the DapB family.

It is found in the cytoplasm. It catalyses the reaction (S)-2,3,4,5-tetrahydrodipicolinate + NAD(+) + H2O = (2S,4S)-4-hydroxy-2,3,4,5-tetrahydrodipicolinate + NADH + H(+). The catalysed reaction is (S)-2,3,4,5-tetrahydrodipicolinate + NADP(+) + H2O = (2S,4S)-4-hydroxy-2,3,4,5-tetrahydrodipicolinate + NADPH + H(+). Its pathway is amino-acid biosynthesis; L-lysine biosynthesis via DAP pathway; (S)-tetrahydrodipicolinate from L-aspartate: step 4/4. In terms of biological role, catalyzes the conversion of 4-hydroxy-tetrahydrodipicolinate (HTPA) to tetrahydrodipicolinate. The protein is 4-hydroxy-tetrahydrodipicolinate reductase of Rickettsia canadensis (strain McKiel).